The sequence spans 224 residues: tRNA (guanine-N(7)-)-methyltransferase (224 aa).

3 residues coordinate S-adenosyl-L-methionine: E57, D82, and D109. D167 contributes to the substrate binding site.

It belongs to the class I-like SAM-binding methyltransferase superfamily. TrmB family.

It carries out the reaction guanosine(46) in tRNA + S-adenosyl-L-methionine = N(7)-methylguanosine(46) in tRNA + S-adenosyl-L-homocysteine. The protein operates within tRNA modification; N(7)-methylguanine-tRNA biosynthesis. Its function is as follows. Catalyzes the formation of N(7)-methylguanine at position 46 (m7G46) in tRNA. This chain is tRNA (guanine-N(7)-)-methyltransferase, found in Chloroflexus aurantiacus (strain ATCC 29366 / DSM 635 / J-10-fl).